We begin with the raw amino-acid sequence, 381 residues long: Cell division protein FtsZ (381 aa).

Positions 1 to 25 (MKFINDAIKESEKREKPSSSSMNSE) are disordered. Residues 7–17 (AIKESEKREKP) show a composition bias toward basic and acidic residues. GTP-binding positions include 48-52 (GAGNN), 135-137 (GTG), glutamate 166, arginine 170, and aspartate 213.

The protein belongs to the FtsZ family. Homodimer. Polymerizes to form a dynamic ring structure in a strictly GTP-dependent manner. Interacts directly with several other division proteins.

Its subcellular location is the cytoplasm. Functionally, essential cell division protein that forms a contractile ring structure (Z ring) at the future cell division site. The regulation of the ring assembly controls the timing and the location of cell division. One of the functions of the FtsZ ring is to recruit other cell division proteins to the septum to produce a new cell wall between the dividing cells. Binds GTP and shows GTPase activity. This chain is Cell division protein FtsZ, found in Methanothermobacter thermautotrophicus (strain ATCC 29096 / DSM 1053 / JCM 10044 / NBRC 100330 / Delta H) (Methanobacterium thermoautotrophicum).